The following is a 172-amino-acid chain: Inorganic pyrophosphatase (172 aa).

Lys28, Arg42, and Tyr54 together coordinate substrate. Mg(2+) contacts are provided by Asp64, Asp69, and Asp101. Tyr140 lines the substrate pocket.

It belongs to the PPase family. In terms of assembly, homohexamer. The cofactor is Mg(2+).

Its subcellular location is the cytoplasm. The enzyme catalyses diphosphate + H2O = 2 phosphate + H(+). Catalyzes the hydrolysis of inorganic pyrophosphate (PPi) forming two phosphate ions. This chain is Inorganic pyrophosphatase, found in Campylobacter jejuni subsp. jejuni serotype O:2 (strain ATCC 700819 / NCTC 11168).